The following is a 569-amino-acid chain: Urease subunit alpha (569 aa).

A Urease domain is found at 131–569 (GGIDTHIHFI…LPLAQRYLLL (439 aa)). Residues H136, H138, and K219 each contribute to the Ni(2+) site. K219 carries the post-translational modification N6-carboxylysine. H221 contributes to the substrate binding site. 2 residues coordinate Ni(2+): H248 and H274. H322 functions as the Proton donor in the catalytic mechanism. Residue D362 coordinates Ni(2+).

Belongs to the metallo-dependent hydrolases superfamily. Urease alpha subunit family. In terms of assembly, heterotrimer of UreA (gamma), UreB (beta) and UreC (alpha) subunits. Three heterotrimers associate to form the active enzyme. Requires Ni cation as cofactor. Post-translationally, carboxylation allows a single lysine to coordinate two nickel ions.

The protein localises to the cytoplasm. The catalysed reaction is urea + 2 H2O + H(+) = hydrogencarbonate + 2 NH4(+). The protein operates within nitrogen metabolism; urea degradation; CO(2) and NH(3) from urea (urease route): step 1/1. This chain is Urease subunit alpha, found in Synechococcus sp. (strain CC9605).